Consider the following 21-residue polypeptide: Nitrilase (21 aa).

This sequence belongs to the carbon-nitrogen hydrolase superfamily. Nitrilase family.

The catalysed reaction is a nitrile + 2 H2O = a carboxylate + NH4(+). Acts on many kinds of nitrile compounds such as aliphatic, aromatic, and heterocyclic mononitriles or dinitriles. Prefers S-(-)-2-(4'-isobutylphenyl)-propionitrile to R-(+)-2-(4'-isobutylphenyl)-propionitrile as the substrate. In Acinetobacter sp. (strain AK226), this protein is Nitrilase.